Reading from the N-terminus, the 366-residue chain is Aminomethyltransferase (366 aa).

This sequence belongs to the GcvT family. The glycine cleavage system is composed of four proteins: P, T, L and H.

It carries out the reaction N(6)-[(R)-S(8)-aminomethyldihydrolipoyl]-L-lysyl-[protein] + (6S)-5,6,7,8-tetrahydrofolate = N(6)-[(R)-dihydrolipoyl]-L-lysyl-[protein] + (6R)-5,10-methylene-5,6,7,8-tetrahydrofolate + NH4(+). Functionally, the glycine cleavage system catalyzes the degradation of glycine. The chain is Aminomethyltransferase from Moorella thermoacetica (strain ATCC 39073 / JCM 9320).